We begin with the raw amino-acid sequence, 404 residues long: Magnesium transporter NIPA4 (404 aa).

Over 1 to 55 (MELRVSNTSCENGSLLHLYCSSQEVLCQIVNDLSPEVPSNATFHSWQERIRQNYG) the chain is Extracellular. N-linked (GlcNAc...) asparagine glycosylation is found at asparagine 7, asparagine 12, and asparagine 40. Residues 56–76 (FYIGLGLAFLSSFLIGSSVIL) form a helical membrane-spanning segment. Over 77–102 (KKKGLLRLVATGATRAVDGGFGYLKD) the chain is Cytoplasmic. A helical transmembrane segment spans residues 103–123 (AMWWAGFLTMAAGEVANFGAY). Alanine 124 is a topological domain (extracellular). The helical transmembrane segment at 125–145 (FAPATVVTPLGALSVLISAIL) threads the bilayer. Over 146-153 (SSYFLRES) the chain is Cytoplasmic. A helical transmembrane segment spans residues 154–174 (LNLLGKLGCVICVAGSTVMVI). Topologically, residues 175–195 (HAPEEEKVTTIMEMASKMKDT) are extracellular. Residues 196 to 216 (GFIVFAVLLLVSCLILIFVIA) traverse the membrane as a helical segment. The Cytoplasmic portion of the chain corresponds to 217–223 (PRYGQRN). A helical transmembrane segment spans residues 224 to 244 (ILIYIIICSVIGAFSVAAVKG). Residues 245–261 (LGITIKNFFQGLPVVRH) lie on the Extracellular side of the membrane. A helical transmembrane segment spans residues 262-282 (PLPYILSLILALSLSTQVNFL). The Cytoplasmic portion of the chain corresponds to 283–293 (NRALDIFNTSL). A helical membrane pass occupies residues 294-314 (VFPIYYVFFTTVVVTSSIILF). Residues 315 to 324 (KEWYSMSAVD) lie on the Extracellular side of the membrane. A helical membrane pass occupies residues 325-345 (IAGTLSGFVTIILGVFMLHAF). The Cytoplasmic portion of the chain corresponds to 346–404 (KDLDISCASLPHMHKNPPPSPAPEPTVIRLEDKNVLVDNIELASTSSPEEKPKVFIIHS).

It belongs to the NIPA family. As to expression, highly expressed in brain, lung, stomach, keratinocytes and leukocytes, and in all other tissues tested except liver, thyroid and fetal brain.

It is found in the cell membrane. The catalysed reaction is Mg(2+)(in) = Mg(2+)(out). Its function is as follows. Acts as a Mg(2+) transporter. Can also transport other divalent cations such as Ba(2+), Sr(2+) and Fe(2+) but to a much less extent than Mg(2+). May be a receptor for ligands (trioxilins A3 and B3) from the hepoxilin pathway. The polypeptide is Magnesium transporter NIPA4 (NIPAL4) (Homo sapiens (Human)).